Consider the following 370-residue polypeptide: Integrin-linked kinase-associated serine/threonine phosphatase 2C (370 aa).

N-acetylmethionine is present on Met1. Positions Met1–Glu69 are disordered. Phosphoserine is present on Ser13. The segment covering Ser33–Ser45 has biased composition (low complexity). Positions Glu46 to Glu69 are enriched in basic and acidic residues. Residues Lys86 to Ile368 form the PPM-type phosphatase domain. Asp130 and Gly131 together coordinate Mn(2+). The residue at position 188 (Lys188) is an N6-acetyllysine. Residues Asp304 and Asp359 each coordinate Mn(2+).

It belongs to the PP2C family. As to quaternary structure, interacts with ILK. Mg(2+) serves as cofactor. Requires Mn(2+) as cofactor.

The protein resides in the cytoplasm. The catalysed reaction is O-phospho-L-seryl-[protein] + H2O = L-seryl-[protein] + phosphate. The enzyme catalyses O-phospho-L-threonyl-[protein] + H2O = L-threonyl-[protein] + phosphate. Functionally, protein phosphatase that may play a role in regulation of cell cycle progression via dephosphorylation of its substrates whose appropriate phosphorylation states might be crucial for cell proliferation. Selectively associates with integrin linked kinase (ILK), to modulate cell adhesion and growth factor signaling. Inhibits the ILK-GSK3B signaling axis and may play an important role in inhibiting oncogenic transformation. This is Integrin-linked kinase-associated serine/threonine phosphatase 2C (ILKAP) from Bos taurus (Bovine).